The following is a 125-amino-acid chain: Small ribosomal subunit protein uS13 (125 aa).

Residues 92 to 125 (RRSLPARGQNTQTNARTRKGRRKTVAGKKKAVKK) are disordered. Positions 107–125 (RTRKGRRKTVAGKKKAVKK) are enriched in basic residues.

It belongs to the universal ribosomal protein uS13 family. In terms of assembly, part of the 30S ribosomal subunit. Forms a loose heterodimer with protein S19. Forms two bridges to the 50S subunit in the 70S ribosome.

Its function is as follows. Located at the top of the head of the 30S subunit, it contacts several helices of the 16S rRNA. In the 70S ribosome it contacts the 23S rRNA (bridge B1a) and protein L5 of the 50S subunit (bridge B1b), connecting the 2 subunits; these bridges are implicated in subunit movement. Contacts the tRNAs in the A and P-sites. This chain is Small ribosomal subunit protein uS13, found in Chlorobium phaeobacteroides (strain BS1).